The chain runs to 492 residues: MALLWGLLALILSCLSSLCSAQFSPVSTMEPLDLQLMDGQAQQKLPPLSLLKLDNQEPGGQIAPKKAPEDCKLSPTPEQTRRLARAMMTFTTDLFSLVAQSSTRPNLILSPLSVALALSHLALGAQNQTLQRLKEVLHADSGPCLPHLLSRLCQDLGPGAFRLAARMYLQKGFPIKEDFLEQSEQLFGAKPMSLTGMKGEDLANINRWVKEATEGKIEDFLSDLPDDTVLLLLNAIHFQGFWRSKFDPNLTQRGAFHLDEQFTVPVDMMQALTYPLHWFLLEQPEIQVAHFPFKNNMSFVVLMPTRFEWNASQVLANLTWDILHQPSLSERPTKVQLPKLHLKYQLDLVATLSQLGLQELFQAPDLRGISDERLVVSSVQHQSALELSEAGVQAAAATSTAMSRMSLSSFIVNRPFLFFILEDSTSLPLFVGSVRNPNPGAQPERKEQQDSPDGKDSFQDHKGLPRGDKPFDPDLKLGPPSEEDYAQPSSPK.

A signal peptide spans 1–22 (MALLWGLLALILSCLSSLCSAQ). A propeptide spanning residues 23-40 (FSPVSTMEPLDLQLMDGQ) is cleaved from the precursor. The interval 56–76 (QEPGGQIAPKKAPEDCKLSPT) is disordered. Residues Cys-71 and Cys-144 are joined by a disulfide bond. Residues Asn-127, Asn-249, Asn-296, Asn-310, and Asn-317 are each glycosylated (N-linked (GlcNAc...) asparagine). Positions 433–492 (SVRNPNPGAQPERKEQQDSPDGKDSFQDHKGLPRGDKPFDPDLKLGPPSEEDYAQPSSPK) are disordered. A compositionally biased stretch (basic and acidic residues) spans 443–475 (PERKEQQDSPDGKDSFQDHKGLPRGDKPFDPDL). Tyr-485 is subject to Sulfotyrosine.

This sequence belongs to the serpin family. In terms of assembly, forms protease inhibiting heterodimer with TMPRSS7. Post-translationally, proteolytically cleaved at Pro-31 by both the prolyl endopeptidase FAP form and antiplasmin-cleaving enzyme FAP soluble form to generate mature alpha-2-antiplasmin. Expressed by the liver and secreted in plasma.

The protein resides in the secreted. In terms of biological role, serine protease inhibitor. The major targets of this inhibitor are plasmin and trypsin, but it also inactivates matriptase-3/TMPRSS7 and chymotrypsin. This chain is Alpha-2-antiplasmin (SERPINF2), found in Bos taurus (Bovine).